Here is a 320-residue protein sequence, read N- to C-terminus: Cytochrome f (320 aa).

Positions 1–35 (MQTRNAFSWLKKQITRSISVSLMIYILTRTSISSA) are cleaved as a signal peptide. Heme-binding residues include Y36, C56, C59, and H60. Residues 286–306 (VQGLLFFLASVILAQIFLVLK) traverse the membrane as a helical segment.

It belongs to the cytochrome f family. As to quaternary structure, the 4 large subunits of the cytochrome b6-f complex are cytochrome b6, subunit IV (17 kDa polypeptide, petD), cytochrome f and the Rieske protein, while the 4 small subunits are PetG, PetL, PetM and PetN. The complex functions as a dimer. The cofactor is heme.

It is found in the plastid. It localises to the chloroplast thylakoid membrane. Component of the cytochrome b6-f complex, which mediates electron transfer between photosystem II (PSII) and photosystem I (PSI), cyclic electron flow around PSI, and state transitions. The chain is Cytochrome f from Solanum bulbocastanum (Wild potato).